A 197-amino-acid chain; its full sequence is Glycerol-3-phosphate acyltransferase (197 aa).

4 helical membrane-spanning segments follow: residues 1 to 21, 78 to 98, 112 to 132, and 155 to 175; these read MNFLLLLLAAYALGSTPFAIV, PVEAALAGLAAFLGHVFSVFL, VLAGINAWVALSALFVWLAVA, and VLLGATPTVAVLALIAGILVW.

It belongs to the PlsY family. Probably interacts with PlsX.

It is found in the cell inner membrane. The enzyme catalyses an acyl phosphate + sn-glycerol 3-phosphate = a 1-acyl-sn-glycero-3-phosphate + phosphate. The protein operates within lipid metabolism; phospholipid metabolism. Functionally, catalyzes the transfer of an acyl group from acyl-phosphate (acyl-PO(4)) to glycerol-3-phosphate (G3P) to form lysophosphatidic acid (LPA). This enzyme utilizes acyl-phosphate as fatty acyl donor, but not acyl-CoA or acyl-ACP. The polypeptide is Glycerol-3-phosphate acyltransferase (Aromatoleum aromaticum (strain DSM 19018 / LMG 30748 / EbN1) (Azoarcus sp. (strain EbN1))).